The sequence spans 101 residues: NADH-quinone oxidoreductase subunit K (101 aa).

3 consecutive transmembrane segments (helical) span residues 4 to 24 (LAHY…GIFL), 30 to 50 (IIIL…FVAF), and 61 to 81 (IFVF…LAIL).

Belongs to the complex I subunit 4L family. NDH-1 is composed of 14 different subunits. Subunits NuoA, H, J, K, L, M, N constitute the membrane sector of the complex.

It is found in the cell inner membrane. The enzyme catalyses a quinone + NADH + 5 H(+)(in) = a quinol + NAD(+) + 4 H(+)(out). Functionally, NDH-1 shuttles electrons from NADH, via FMN and iron-sulfur (Fe-S) centers, to quinones in the respiratory chain. The immediate electron acceptor for the enzyme in this species is believed to be ubiquinone. Couples the redox reaction to proton translocation (for every two electrons transferred, four hydrogen ions are translocated across the cytoplasmic membrane), and thus conserves the redox energy in a proton gradient. The sequence is that of NADH-quinone oxidoreductase subunit K from Paraburkholderia xenovorans (strain LB400).